Here is a 225-residue protein sequence, read N- to C-terminus: Ribosome maturation factor RimM (225 aa).

Positions 144–225 (ADEFYWVDLI…RIVVDWEADY (82 aa)) constitute a PRC barrel domain.

The protein belongs to the RimM family. As to quaternary structure, binds ribosomal protein uS19.

Its subcellular location is the cytoplasm. An accessory protein needed during the final step in the assembly of 30S ribosomal subunit, possibly for assembly of the head region. Essential for efficient processing of 16S rRNA. May be needed both before and after RbfA during the maturation of 16S rRNA. It has affinity for free ribosomal 30S subunits but not for 70S ribosomes. The polypeptide is Ribosome maturation factor RimM (Burkholderia orbicola (strain MC0-3)).